The primary structure comprises 357 residues: Sorbitol dehydrogenase (357 aa).

At Ala2 the chain carries N-acetylalanine. Cys45 contributes to the Zn(2+) binding site. Position 51 (Tyr51) interacts with substrate. Zn(2+) contacts are provided by His70 and Glu71. Substrate is bound at residue Glu156. NAD(+) contacts are provided by Ile184, Asp204, and Arg209. Phosphoserine is present on residues Ser211 and Ser225. Residues 273–275 (VGL) and 297–299 (VFR) contribute to the NAD(+) site. The substrate site is built by Arg299 and Tyr300.

Belongs to the zinc-containing alcohol dehydrogenase family. In terms of assembly, homotetramer. Zn(2+) is required as a cofactor.

The protein localises to the mitochondrion membrane. It localises to the cell projection. The protein resides in the cilium. It is found in the flagellum. The enzyme catalyses xylitol + NAD(+) = D-xylulose + NADH + H(+). It carries out the reaction L-iditol + NAD(+) = keto-L-sorbose + NADH + H(+). It catalyses the reaction keto-D-fructose + NADH + H(+) = D-sorbitol + NAD(+). Its function is as follows. Polyol dehydrogenase that catalyzes the reversible NAD(+)-dependent oxidation of various sugar alcohols. Is active with xylitol, L-iditol and D-sorbitol (D-glucitol) as substrates, leading to the C2-oxidized products D-xylulose, L-sorbose and D-fructose, respectively. Is a key enzyme in the polyol pathway that interconverts glucose and fructose via sorbitol, which constitutes an important alternate route for glucose metabolism. May play a role in sperm motility by using sorbitol as an alternative energy source for sperm motility. This Pongo abelii (Sumatran orangutan) protein is Sorbitol dehydrogenase (SORD).